Reading from the N-terminus, the 202-residue chain is Transmembrane 4 L6 family member 1 (202 aa).

The Cytoplasmic segment spans residues 1–9 (MCSSKCTRY). A helical membrane pass occupies residues 10-30 (IGHSLVVFAVLCIVANILLYF). Residues 31–49 (PNGETKYAYEDHLSRFVWF) are Extracellular-facing. A helical membrane pass occupies residues 50–70 (FAGIVGGGLLILLPAFVFLGL). Topologically, residues 71 to 93 (EGEDCCGCWSCENYGKRCTMLSS) are cytoplasmic. Residues 94-114 (IMAALIGIAGSGYCVIVAALG) traverse the membrane as a helical segment. Over 115–161 (LAEGPKCGDSHGMWNYTFANTDGQYLLDPTTWSKCHEPNNIVEWNVT) the chain is Extracellular. N-linked (GlcNAc...) asparagine glycans are attached at residues asparagine 129 and asparagine 159. The chain crosses the membrane as a helical span at residues 162 to 182 (LFSILLALGGLEFILCLIQVI). Residues 183–202 (NGVLEGMCSYCCSHQQQYDC) are Cytoplasmic-facing.

Belongs to the L6 tetraspanin family. Present in high molecular weight complexes in tumor cells. Interacts with SDCBP2.

The protein resides in the membrane. This is Transmembrane 4 L6 family member 1 (TM4SF1) from Mesocricetus auratus (Golden hamster).